The sequence spans 389 residues: Chalcone synthase 2 (389 aa).

Cysteine 164 is a catalytic residue.

It belongs to the thiolase-like superfamily. Chalcone/stilbene synthases family.

It catalyses the reaction (E)-4-coumaroyl-CoA + 3 malonyl-CoA + 3 H(+) = 2',4,4',6'-tetrahydroxychalcone + 3 CO2 + 4 CoA. Its pathway is secondary metabolite biosynthesis; flavonoid biosynthesis. Its function is as follows. The primary product of this enzyme is 4,2',4',6'-tetrahydroxychalcone (also termed naringenin-chalcone or chalcone) which can under specific conditions spontaneously isomerize into naringenin. This is Chalcone synthase 2 (CHS2) from Solanum lycopersicum (Tomato).